Consider the following 253-residue polypeptide: tRNA uridine(34) hydroxylase (253 aa).

The region spanning 127 to 221 is the Rhodanese domain; it reads RGRPLVLLDT…YFEEVGGEGY (95 aa). The active-site Cysteine persulfide intermediate is C181.

Belongs to the TrhO family.

It carries out the reaction uridine(34) in tRNA + AH2 + O2 = 5-hydroxyuridine(34) in tRNA + A + H2O. Functionally, catalyzes oxygen-dependent 5-hydroxyuridine (ho5U) modification at position 34 in tRNAs. The sequence is that of tRNA uridine(34) hydroxylase from Xanthomonas oryzae pv. oryzae (strain MAFF 311018).